Reading from the N-terminus, the 1203-residue chain is DNA-directed RNA polymerase subunit beta' (1203 aa).

The Zn(2+) site is built by cysteine 60, cysteine 62, cysteine 75, and cysteine 78. Residues aspartate 449, aspartate 451, and aspartate 453 each coordinate Mg(2+). Zn(2+) contacts are provided by cysteine 818, cysteine 892, cysteine 899, and cysteine 902.

It belongs to the RNA polymerase beta' chain family. The RNAP catalytic core consists of 2 alpha, 1 beta, 1 beta' and 1 omega subunit. When a sigma factor is associated with the core the holoenzyme is formed, which can initiate transcription. It depends on Mg(2+) as a cofactor. Requires Zn(2+) as cofactor.

It carries out the reaction RNA(n) + a ribonucleoside 5'-triphosphate = RNA(n+1) + diphosphate. In terms of biological role, DNA-dependent RNA polymerase catalyzes the transcription of DNA into RNA using the four ribonucleoside triphosphates as substrates. The polypeptide is DNA-directed RNA polymerase subunit beta' (Bacillus cereus (strain ATCC 10987 / NRS 248)).